Here is a 323-residue protein sequence, read N- to C-terminus: MNKEEQEDPQQEQISTVQENDPRNLQQLGMLLVSPGLDEDRLSEKMISKIKKSRDIEKNQKLLISRLSQKEEDHSGKPPTITTSPAEKTVPFKSLNHSLKRKRVPPALNFSDIQASSHLHGSKSAPPNITRFPQHKNSLRVRYMGRMAPTNQDYHPSVANSYMTATYPYPYTGLPPVPCYPYSSTPTQTHAYEGYYSPMYPGPLYNNGIIPADYHAKRKKLAGRSPHLEDLTSRKRTFVSKHHNGDPIISKTDEDIECSVTKNSLSEGASLNDDADDDNDKERIIIGEISLYDDVFKFEVRDDKNDYMKACETIWTEWHNLKK.

Residues 1 to 10 are compositionally biased toward acidic residues; sequence MNKEEQEDPQ. Positions 1-26 are disordered; that stretch reads MNKEEQEDPQQEQISTVQENDPRNLQ. A compositionally biased stretch (polar residues) spans 11-26; the sequence is QEQISTVQENDPRNLQ. Position 34 is a phosphoserine (Ser-34). Residues 67–87 are disordered; it reads LSQKEEDHSGKPPTITTSPAE. Phosphoserine occurs at positions 225, 266, and 270.

Forms a complex with DIG1, STE12 and either FUS3 or KSS1. The interaction of FUS3 with STE12 depends on the presence of both DIG1 and DIG2. STE12 is lost from FUS3/DIG1/DIG2 complex after pheromone treatment. DIG1 and DIG2 have also been reported to interact with CLN1 and CLN2. Phosphorylated by FUS3 and KSS1, in a pheromone-stimulated manner.

The protein resides in the nucleus. Its function is as follows. DIG2 and DIG1 are negative regulators of the filamentation and pheromone induced mating program. DIG1 and DIG2 inhibit the transcriptional activity of STE12 by direct protein-protein interaction. DIG2 binds to the DNA binding domain (DBD) of STE12 and thus inhibits transcription when overexpressed. The chain is Down-regulator of invasive growth 2 (DIG2) from Saccharomyces cerevisiae (strain ATCC 204508 / S288c) (Baker's yeast).